A 707-amino-acid polypeptide reads, in one-letter code: Toxin RTX-I translocation ATP-binding protein (707 aa).

One can recognise a Peptidase C39 domain in the interval 1–125 (MDFYREEDYG…SLYQGKLILV (125 aa)). The active site involves His-83. In terms of domain architecture, ABC transmembrane type-1 spans 154 to 436 (FIETLIVSIF…LAQLWQDFQQ (283 aa)). 5 consecutive transmembrane segments (helical) span residues 158-178 (LIVS…FQVV), 188-208 (FSTL…EIVL), 295-315 (LVIL…SPIL), 387-407 (VVMV…DLSI), and 410-430 (LIAF…LAQL). The ABC transporter domain occupies 468–703 (ITFRNIRFRY…PNGLYHYLHQ (236 aa)). 502–509 (GRSGSGKS) provides a ligand contact to ATP.

Belongs to the ABC transporter superfamily. Protein-1 exporter (TC 3.A.1.109) family. Homodimer.

It is found in the cell membrane. Its function is as follows. Involved in the transport of the toxin RTX-I as well as that of RTX-II. The polypeptide is Toxin RTX-I translocation ATP-binding protein (apxIB) (Actinobacillus pleuropneumoniae (Haemophilus pleuropneumoniae)).